The following is a 347-amino-acid chain: NADH-ubiquinone oxidoreductase chain 2 (347 aa).

10 helical membrane-spanning segments follow: residues 13-33, 55-75, 96-116, 123-143, 149-169, 178-198, 201-221, 247-267, 274-294, and 326-346; these read IFAG…WVGL, AAIK…MAIL, LMIM…FWVP, PLMS…SIMY, LNVN…SWGG, ILAY…PYNP, TILN…LLNL, TLLS…WVII, NSLI…YFYL, and LPTL…MLMI.

Belongs to the complex I subunit 2 family. As to quaternary structure, core subunit of respiratory chain NADH dehydrogenase (Complex I) which is composed of 45 different subunits. Interacts with TMEM242.

It is found in the mitochondrion inner membrane. The catalysed reaction is a ubiquinone + NADH + 5 H(+)(in) = a ubiquinol + NAD(+) + 4 H(+)(out). Its function is as follows. Core subunit of the mitochondrial membrane respiratory chain NADH dehydrogenase (Complex I) which catalyzes electron transfer from NADH through the respiratory chain, using ubiquinone as an electron acceptor. Essential for the catalytic activity and assembly of complex I. In Pan paniscus (Pygmy chimpanzee), this protein is NADH-ubiquinone oxidoreductase chain 2.